The chain runs to 601 residues: Casbene synthase, chloroplastic (601 aa).

The transit peptide at 1-56 directs the protein to the chloroplast; sequence MALPSAAMQSNPEKLNLFHRLSSLPTTSLEYGNNRFPFFSSSAKSHFKKPTQACLS. 5 residues coordinate Mg(2+): aspartate 355, aspartate 359, asparagine 499, serine 503, and glutamate 507. Residues 355–359 carry the DDXXD motif motif; the sequence is DDTID.

Belongs to the terpene synthase family. It depends on Mg(2+) as a cofactor.

Its subcellular location is the plastid. It is found in the chloroplast. The enzyme catalyses (2E,6E,10E)-geranylgeranyl diphosphate = casbene + diphosphate. Its function is as follows. Catalyzes the cyclization of geranylgeranyl diphosphate to casbene, a diterpene phytoalexin with antibacterial and antifungal activity. The protein is Casbene synthase, chloroplastic of Ricinus communis (Castor bean).